The following is a 301-amino-acid chain: Homeobox protein Hox-D13 (301 aa).

2 disordered regions span residues 1-20 and 55-75; these read MDGL…TPGQ and GERS…PGSG. Residues 8–18 are compositionally biased toward gly residues; sequence SSGGGGGGGTP. The segment at residues 234–293 is a DNA-binding region (homeobox); sequence GRKKRVPYTKLQLKELENEYAINKFINKDKRRRISAATNLSERQVTIWFQNRRVKDKKIV.

Belongs to the Abd-B homeobox family.

Its subcellular location is the nucleus. Its function is as follows. Sequence-specific transcription factor that binds gene promoters and activates their transcription. Part of a developmental regulatory system that provides cells with specific positional identities on the anterior-posterior axis. The protein is Homeobox protein Hox-D13 (HOXD13) of Gallus gallus (Chicken).